Here is a 140-residue protein sequence, read N- to C-terminus: Inner membrane protein YphA (140 aa).

The Cytoplasmic segment spans residues 1-13 (MNTLRYFDFGAAR). The chain crosses the membrane as a helical span at residues 14–34 (PVLLLIARIAVVLIFIIFGFP). Residues 35–56 (KMMGFDGTVQYMASLGAPMPML) lie on the Periplasmic side of the membrane. The chain crosses the membrane as a helical span at residues 57-77 (AAIIAVVMEVPAAILIVLGFF). Residues 78–79 (TR) are Cytoplasmic-facing. A helical membrane pass occupies residues 80–100 (PLAVLFIFYTLGTAVIGHHYW). Over 101–116 (DMTGDAVGPNMINFWK) the chain is Periplasmic. Residues 117-137 (NVSIAGAFLLLAITGPGAISL) traverse the membrane as a helical segment. Residues 138-140 (DRR) lie on the Cytoplasmic side of the membrane.

Belongs to the DoxX family.

Its subcellular location is the cell inner membrane. The polypeptide is Inner membrane protein YphA (yphA) (Escherichia coli (strain K12)).